We begin with the raw amino-acid sequence, 965 residues long: Glycine dehydrogenase (decarboxylating) 1 (965 aa).

K713 is subject to N6-(pyridoxal phosphate)lysine.

The protein belongs to the GcvP family. In terms of assembly, the glycine cleavage system is composed of four proteins: P, T, L and H. Pyridoxal 5'-phosphate is required as a cofactor.

The catalysed reaction is N(6)-[(R)-lipoyl]-L-lysyl-[glycine-cleavage complex H protein] + glycine + H(+) = N(6)-[(R)-S(8)-aminomethyldihydrolipoyl]-L-lysyl-[glycine-cleavage complex H protein] + CO2. Its function is as follows. The glycine cleavage system catalyzes the degradation of glycine. The P protein binds the alpha-amino group of glycine through its pyridoxal phosphate cofactor; CO(2) is released and the remaining methylamine moiety is then transferred to the lipoamide cofactor of the H protein. This Colwellia psychrerythraea (strain 34H / ATCC BAA-681) (Vibrio psychroerythus) protein is Glycine dehydrogenase (decarboxylating) 1.